The primary structure comprises 206 residues: Probable glutathione S-transferase 9 (206 aa).

The GST N-terminal domain maps to 2–79 (VSYKLIYFQS…YLSKQFGISG (78 aa)). Residues Y8, W39, K43, 49-51 (GQV), and 63-64 (QS) each bind glutathione. Positions 81 to 206 (SSWEEAQVDA…WIEKRPVTSR (126 aa)) constitute a GST C-terminal domain.

The protein belongs to the GST superfamily. Sigma family.

The catalysed reaction is RX + glutathione = an S-substituted glutathione + a halide anion + H(+). Conjugation of reduced glutathione to a wide number of exogenous and endogenous hydrophobic electrophiles. In Caenorhabditis elegans, this protein is Probable glutathione S-transferase 9 (gst-9).